Consider the following 578-residue polypeptide: SCARECROW-LIKE protein 7 (578 aa).

Over residues V18 to Q29 the composition is skewed to low complexity. 2 disordered regions span residues V18 to G84 and P146 to P173. Over residues P49–Q61 the composition is skewed to basic residues. Over residues Q62–H74 the composition is skewed to low complexity. Residues P146–T156 show a composition bias toward pro residues. The segment covering H157–P173 has biased composition (low complexity). Residues S198 to R578 enclose the GRAS domain. Residues A205–A264 are leucine repeat I (LRI). The tract at residues Y283–G349 is VHIID. Positions I314–D318 match the VHIID motif. Positions A365–D397 are leucine repeat II (LRII). Residues V406 to R497 are PFYRE. The LXXLL motif motif lies at L414 to L418. Residues G500–R578 form an SAW region.

It belongs to the GRAS family. As to quaternary structure, homodimer.

The protein resides in the nucleus. Probable transcription factor involved in plant development. Involved in environmental abiotic stress resistance. May increase the expression of stress-responsive genes. Binds DNA in vitro. The polypeptide is SCARECROW-LIKE protein 7 (Oryza sativa subsp. japonica (Rice)).